Consider the following 414-residue polypeptide: UDP-N-acetylmuramoylalanine--D-glutamate ligase (414 aa).

104 to 110 (GSNGKST) provides a ligand contact to ATP.

This sequence belongs to the MurCDEF family.

Its subcellular location is the cytoplasm. The enzyme catalyses UDP-N-acetyl-alpha-D-muramoyl-L-alanine + D-glutamate + ATP = UDP-N-acetyl-alpha-D-muramoyl-L-alanyl-D-glutamate + ADP + phosphate + H(+). It functions in the pathway cell wall biogenesis; peptidoglycan biosynthesis. Functionally, cell wall formation. Catalyzes the addition of glutamate to the nucleotide precursor UDP-N-acetylmuramoyl-L-alanine (UMA). The polypeptide is UDP-N-acetylmuramoylalanine--D-glutamate ligase (Francisella philomiragia subsp. philomiragia (strain ATCC 25017 / CCUG 19701 / FSC 153 / O#319-036)).